Consider the following 297-residue polypeptide: Chelated iron transport system membrane protein YfeD (297 aa).

The next 8 helical transmembrane spans lie at Ala20 to Leu40, Ile58 to Phe78, Thr96 to Ile116, Ile133 to Leu153, Ile172 to Val192, Ala197 to Ile217, Met224 to Phe244, and Gly248 to Tyr268.

Belongs to the ABC-3 integral membrane protein family.

The protein resides in the cell inner membrane. Functionally, part of an ATP-driven transport system YfeABCD for chelated iron. The sequence is that of Chelated iron transport system membrane protein YfeD (yfeD) from Yersinia pestis.